The chain runs to 86 residues: Small ribosomal subunit protein uS15 (86 aa).

It belongs to the universal ribosomal protein uS15 family. Part of the 30S ribosomal subunit. Forms a bridge to the 50S subunit in the 70S ribosome, contacting the 23S rRNA.

One of the primary rRNA binding proteins, it binds directly to 16S rRNA where it helps nucleate assembly of the platform of the 30S subunit by binding and bridging several RNA helices of the 16S rRNA. Its function is as follows. Forms an intersubunit bridge (bridge B4) with the 23S rRNA of the 50S subunit in the ribosome. The protein is Small ribosomal subunit protein uS15 of Neorickettsia sennetsu (strain ATCC VR-367 / Miyayama) (Ehrlichia sennetsu).